The following is a 524-amino-acid chain: MNTHPSHPDHPADTLPARGNREGTTARTYEVRTFGCQMNVHDSERLSGLLEEAGYTAAGEGDTPDLIVFNTCAVRENADQRLYGTLGNLRAVKENHPGMQIAVGGCLAQKDKDTVVKKAPWVDVVFGTHNIASLPTLLNRAEHNQKAEVEIVDSLEQFPSVLPAKRESAYAGWVSVSVGCNNTCTFCIVPSLRGKEQDRRPGDILAEVQALVDQGVSEVTLLGQNVNAYGVNFVDPELERDRSAFSKLLRACGDIEGLERVRFTSPHPAEFTSDVIDAMAETPNICPQLHMPLQSGSDRVLKEMRRSYRSAKFLAILDEVRAKIPHASITTDIIVGFPGETEEDFQATLDVVEKARFTSAYTFQYSPRPGTPAADYENQVPKKVVQERYERLMALQERICEEENQKFIGQTVELLVQAGGGRKNDATKRMSGRARDGRLVHFTPVGTIDGEIRPGDVVTVEVTEAKPFFLIADAGVLTHRRTRAGDNSAVGQVPTTAPIGVGLGLPRIGAPVPAPATPDNACGC.

The segment covering 1–12 has biased composition (basic and acidic residues); the sequence is MNTHPSHPDHPA. Positions 1 to 23 are disordered; the sequence is MNTHPSHPDHPADTLPARGNREG. The 117-residue stretch at 27 to 143 folds into the MTTase N-terminal domain; that stretch reads RTYEVRTFGC…LPTLLNRAEH (117 aa). Residues cysteine 36, cysteine 72, cysteine 106, cysteine 180, cysteine 184, and cysteine 187 each contribute to the [4Fe-4S] cluster site. Residues 166–402 form the Radical SAM core domain; it reads RESAYAGWVS…MALQERICEE (237 aa). The TRAM domain occupies 405–476; that stretch reads QKFIGQTVEL…PFFLIADAGV (72 aa).

The protein belongs to the methylthiotransferase family. MiaB subfamily. As to quaternary structure, monomer. [4Fe-4S] cluster serves as cofactor.

The protein resides in the cytoplasm. It catalyses the reaction N(6)-dimethylallyladenosine(37) in tRNA + (sulfur carrier)-SH + AH2 + 2 S-adenosyl-L-methionine = 2-methylsulfanyl-N(6)-dimethylallyladenosine(37) in tRNA + (sulfur carrier)-H + 5'-deoxyadenosine + L-methionine + A + S-adenosyl-L-homocysteine + 2 H(+). Its function is as follows. Catalyzes the methylthiolation of N6-(dimethylallyl)adenosine (i(6)A), leading to the formation of 2-methylthio-N6-(dimethylallyl)adenosine (ms(2)i(6)A) at position 37 in tRNAs that read codons beginning with uridine. The polypeptide is tRNA-2-methylthio-N(6)-dimethylallyladenosine synthase (Corynebacterium efficiens (strain DSM 44549 / YS-314 / AJ 12310 / JCM 11189 / NBRC 100395)).